Reading from the N-terminus, the 618-residue chain is Nuclear RNA export factor 1 (618 aa).

Positions 1-15 (MADEGKSYNEHDDRV) are enriched in basic and acidic residues. The interval 1 to 113 (MADEGKSYNE…RGGAGTSQDG (113 aa)) is disordered. Residue Ala-2 is modified to N-acetylalanine. Positions 2 to 59 (ADEGKSYNEHDDRVSFPQRRKKGRGPFRWKCGEGNRRSGRGGSGVQSSRFEEDDGDVA) are minor non-specific RNA-binding. The segment at 2-117 (ADEGKSYNEH…GTSQDGTTKN (116 aa)) is RNA-binding (RBD). The tract at residues 2–197 (ADEGKSYNEH…IIINASAPPY (196 aa)) is interaction with ALYREF/THOC4 and LUZP4. Positions 19 to 28 (QRRKKGRGPF) are enriched in basic residues. Arg-41 carries the asymmetric dimethylarginine; alternate modification. Arg-41 carries the omega-N-methylarginine; alternate modification. The major non-specific RNA-binding stretch occupies residues 60 to 117 (MNDPQDGPRVRYNPYTNRPNRRGDGWHDRDRIHITVRRDRAPAERGGAGTSQDGTTKN). The tract at residues 60-117 (MNDPQDGPRVRYNPYTNRPNRRGDGWHDRDRIHITVRRDRAPAERGGAGTSQDGTTKN) is RNA binding. Positions 66 to 99 (GPRVRYNPYTNRPNRRGDGWHDRDRIHITVRRDR) match the Nuclear localization signal motif. Positions 80–102 (RRGDGWHDRDRIHITVRRDRAPA) are enriched in basic and acidic residues. A Nuclear export signal motif is present at residues 82–109 (GDGWHDRDRIHITVRRDRAPAERGGAGT). The region spanning 118–197 (WFKITIPYGR…IIINASAPPY (80 aa)) is the RRM domain. Position 125 is a 3'-nitrotyrosine (Tyr-125). 4 LRR repeats span residues 265–290 (ELLS…QKAP), 291–314 (NLKT…IKGL), 315–342 (KLEE…AIRE), and 343–370 (RFPK…TMLP). Positions 385 to 535 (LVLRFLQQYY…LCIVNDELFV (151 aa)) constitute an NTF2 domain. The TAP-C domain occupies 564 to 618 (PEQQEMLQAFSTQSGMNLEWSQKCLQDNNWDYTRSAQAFTLLKAKGEIPEVAFMK).

The protein belongs to the NXF family. In terms of assembly, heterodimer (via NTF2 domain) with NXT1. The formation of NXF1-NXT1 heterodimers is required for the NXF1-mediated nuclear mRNA export. Forms a complex with RANBP2/NUP358, NXT1 and RANGAP1. Associates with the exon junction complex (EJC). Associates with the transcription/export (TREX) complex. Found in a mRNA complex with UPF3A and UPF3B. Found in a post-splicing complex with RBM8A, UPF1, UPF2, UPF3A, UPF3B and RNPS1. Interacts (via N-terminus) with DHX9 (via N-terminus); this interaction is direct and negatively regulates NXF1-mediated nuclear export of constitutive transport element (CTE)-containing cellular mRNAs. Interacts with FYTTD1/UIF. Interacts with EIF4A3. Interacts with NUP42. Interacts with ALYREF/THOC4. Interacts with CHTOP. Interacts with FRG1 (via N-terminus). Interacts with LUZP4. Interacts with FMR1; the interaction occurs in a mRNA-dependent and polyribosomes-independent manner in the nucleus. Interacts with CPSF6 (via N-terminus); this interaction is direct. Interacts with RBM15. Interacts with RBM15B. Interacts with MCM3AP; this interaction is not mediated by RNA. Interacts with DDX3X (via C-terminus); this interaction may be partly involved in DDX3X nuclear export and in NXF1 localization to stress granules. Interacts with PABPC1/PABP1. In terms of tissue distribution, expressed ubiquitously.

The protein resides in the nucleus. It localises to the nucleoplasm. Its subcellular location is the nucleus speckle. It is found in the cytoplasm. The protein localises to the nuclear pore complex. The protein resides in the nucleus envelope. It localises to the stress granule. Its function is as follows. Involved in the nuclear export of mRNA species bearing retroviral constitutive transport elements (CTE) and in the export of mRNA from the nucleus to the cytoplasm (TAP/NFX1 pathway). The NXF1-NXT1 heterodimer is involved in the export of HSP70 mRNA in conjunction with ALYREF/THOC4 and THOC5 components of the TREX complex. ALYREF/THOC4-bound mRNA is thought to be transferred to the NXF1-NXT1 heterodimer for export. Also involved in nuclear export of m6A-containing mRNAs: interaction between SRSF3 and YTHDC1 facilitates m6A-containing mRNA-binding to both SRSF3 and NXF1, promoting mRNA nuclear export. The protein is Nuclear RNA export factor 1 (Nxf1) of Mus musculus (Mouse).